The chain runs to 612 residues: Chaperone protein DnaK (612 aa).

T174 bears the Phosphothreonine; by autocatalysis mark. The interval 578 to 612 is disordered; that stretch reads GGQTGGATNTDSAGQGTTQDNVYEANYKVEDDDNK. The segment covering 586–598 has biased composition (polar residues); it reads NTDSAGQGTTQDN.

This sequence belongs to the heat shock protein 70 family.

In terms of biological role, acts as a chaperone. The polypeptide is Chaperone protein DnaK (Thermoanaerobacter sp. (strain X514)).